A 361-amino-acid polypeptide reads, in one-letter code: Ribosomal RNA large subunit methyltransferase M (361 aa).

Residues S193, 226-229 (CPGG), D245, D265, and D283 each bind S-adenosyl-L-methionine. K312 functions as the Proton acceptor in the catalytic mechanism.

It belongs to the class I-like SAM-binding methyltransferase superfamily. RNA methyltransferase RlmE family. RlmM subfamily. Monomer.

The protein resides in the cytoplasm. It catalyses the reaction cytidine(2498) in 23S rRNA + S-adenosyl-L-methionine = 2'-O-methylcytidine(2498) in 23S rRNA + S-adenosyl-L-homocysteine + H(+). In terms of biological role, catalyzes the 2'-O-methylation at nucleotide C2498 in 23S rRNA. This is Ribosomal RNA large subunit methyltransferase M from Histophilus somni (strain 129Pt) (Haemophilus somnus).